The chain runs to 133 residues: Pheromone-regulated membrane protein 3 (133 aa).

Residues 1–104 (MTAMKEDNAA…SKVQRENKGS (104 aa)) lie on the Nuclear side of the membrane. The tract at residues 36–100 (ADGFVINKAK…DASESKVQRE (65 aa)) is disordered. The short motif at 69-75 (GRVRKHK) is the Bipartite nuclear localization signal element. The span at 90-100 (KDASESKVQRE) shows a compositional bias: basic and acidic residues. A helical membrane pass occupies residues 105–127 (FYQGAIFGSFLGAAVTTVLSNLA). The Perinuclear space segment spans residues 128–133 (VKALQN).

As to quaternary structure, interacts with KAR5.

It is found in the nucleus outer membrane. The protein localises to the cytoplasm. It localises to the cytoskeleton. Its subcellular location is the microtubule organizing center. The protein resides in the spindle pole body. In terms of biological role, required for the fusion of nuclear envelopes during mating, ensuring proper karyogamy. Plays a role in the initiation of outer nuclear envelope fusion. The sequence is that of Pheromone-regulated membrane protein 3 (PRM3) from Saccharomyces cerevisiae (strain ATCC 204508 / S288c) (Baker's yeast).